The following is a 452-amino-acid chain: Peptidase M20 domain-containing protein SMAC_03666.2 (452 aa).

The first 28 residues, 1–28, serve as a signal peptide directing secretion; that stretch reads MKATSNLLLLWGTSLLSPSSAFVIDNHH. The N-linked (GlcNAc...) asparagine glycan is linked to N140. A Zn(2+)-binding site is contributed by D186. Catalysis depends on E220, which acts as the Proton acceptor. E221 is a binding site for Zn(2+). Residue N315 is glycosylated (N-linked (GlcNAc...) asparagine).

Belongs to the peptidase M20A family. It depends on Zn(2+) as a cofactor.

The protein localises to the secreted. This Sordaria macrospora (strain ATCC MYA-333 / DSM 997 / K(L3346) / K-hell) protein is Peptidase M20 domain-containing protein SMAC_03666.2.